We begin with the raw amino-acid sequence, 388 residues long: uncharacterized protein (388 aa).

[4Fe-4S] cluster-binding residues include Cys18, Cys24, Cys27, and Cys99. S-adenosyl-L-methionine contacts are provided by Gln212, Glu262, and Asn313. Residue Cys343 is the Nucleophile of the active site.

Belongs to the class I-like SAM-binding methyltransferase superfamily. RNA M5U methyltransferase family.

This is an uncharacterized protein from Bdellovibrio bacteriovorus (strain ATCC 15356 / DSM 50701 / NCIMB 9529 / HD100).